Reading from the N-terminus, the 705-residue chain is CAP-Gly domain-containing linker protein 4 (705 aa).

ANK repeat units lie at residues 65 to 101, 149 to 180, and 186 to 215; these read TSVS…NVND, TNMN…DVDA, and NFGT…NPAF. The CAP-Gly 1 domain maps to 303–345; that stretch reads GTTEFASGQWAGIELDEPEGKNNGSVGKVQYFKCAPKYGIFAP. Disordered stretches follow at residues 391–410 and 431–479; these read MTSK…PGEE and TSSL…ANNS. The segment covering 441 to 452 has biased composition (polar residues); sequence PKKQNAISSNKK. The segment covering 455–479 has biased composition (low complexity); the sequence is SKSPSLSSRASAGLNSSATSTANNS. The CAP-Gly 2 domain maps to 505–547; the sequence is GTTNFAPGYWYGIELEKPHGKNDGSVGGVQYFSCSPRYGIFAP. Phosphoserine is present on residues Ser-557 and Ser-609. A CAP-Gly 3 domain is found at 644 to 686; it reads GPTDFASGIWLGLELRSAKGKNDGSVGDKRYFTCKPNHGVLVR.

This chain is CAP-Gly domain-containing linker protein 4 (CLIP4), found in Homo sapiens (Human).